Here is a 644-residue protein sequence, read N- to C-terminus: Exoribonuclease 2 (644 aa).

An RNB domain is found at 189-516 (REDLTALDFV…NHRLLKAVIK (328 aa)). Positions 561 to 643 (DTRFAAEIVD…ETRSIIARPV (83 aa)) constitute an S1 motif domain.

Belongs to the RNR ribonuclease family. RNase II subfamily.

The protein resides in the cytoplasm. It catalyses the reaction Exonucleolytic cleavage in the 3'- to 5'-direction to yield nucleoside 5'-phosphates.. Functionally, involved in mRNA degradation. Hydrolyzes single-stranded polyribonucleotides processively in the 3' to 5' direction. The sequence is that of Exoribonuclease 2 from Escherichia coli O127:H6 (strain E2348/69 / EPEC).